Consider the following 381-residue polypeptide: uncharacterized protein (381 aa).

A run of 11 helical transmembrane segments spans residues isoleucine 10 to tyrosine 29, isoleucine 75 to leucine 93, leucine 98 to arginine 117, tyrosine 130 to valine 147, threonine 157 to tyrosine 179, isoleucine 199 to glutamate 221, leucine 236 to isoleucine 255, tyrosine 262 to threonine 284, asparagine 289 to leucine 311, alanine 323 to leucine 340, and leucine 355 to isoleucine 374.

The protein resides in the cell membrane. This is an uncharacterized protein from Rickettsia prowazekii (strain Madrid E).